The primary structure comprises 4450 residues: Gramicidin S synthase 2 (4450 aa).

The interval 467 to 1044 (DKTIHQLFTE…IQEISNYING (578 aa)) is domain 1 (proline-activating). 4 consecutive Carrier domains span residues 971 to 1046 (VPTN…NGAK), 2006 to 2081 (APSS…ADGE), 3051 to 3126 (APRT…EETD), and 4089 to 4164 (APRN…THQE). O-(pantetheine 4'-phosphoryl)serine is present on residues Ser1006, Ser2041, Ser3086, and Ser4124. The segment at 1521-2080 (DHVAVGWKDQ…SALAQYIADG (560 aa)) is domain 2 (valine-activating). The segment at 2538-3134 (YATNKIFHEL…TDTEQYMAIQ (597 aa)) is domain 3 (ornithine-activating). Residues 3590-4172 (IQELFEEQVK…QESENNVHQP (583 aa)) form a domain 4 (leucine-activating) region.

It belongs to the ATP-dependent AMP-binding enzyme family. As to quaternary structure, large multienzyme complex of GrsA and GrsB. It depends on pantetheine 4'-phosphate as a cofactor.

It functions in the pathway antibiotic biosynthesis; gramicidin S biosynthesis. Its function is as follows. This protein is a multifunctional enzyme, able to activate and polymerize the amino acids Pro, Val, Orn and Leu. Activation sites for these AA consist of individual domains. The sequence is that of Gramicidin S synthase 2 (grsB) from Brevibacillus brevis (Bacillus brevis).